Reading from the N-terminus, the 492-residue chain is Fibroblast growth factor receptor substrate 3 (492 aa).

The N-myristoyl glycine moiety is linked to residue glycine 2. One can recognise an IRS-type PTB domain in the interval 13–115; sequence VPHNHPTKFK…QCNSINVTEE (103 aa). 4 disordered regions span residues 122–230, 328–414, 426–454, and 469–492; these read SSHP…SDQR, LPPV…PPRQ, GTARPKGPQNPSVSGAPGPTPHPVRSSDS, and LQRALPRDDGAVRKTRHNSTDLPL. Over residues 371 to 382 the composition is skewed to polar residues; sequence QKPTSTRASARS.

Binds NGFR, GRB2, PTPN11 and ERK2. Binds FGFR1 and NTRK1. In terms of processing, phosphorylated on tyrosine residues upon stimulation by BFGF or NGFB. Phosphorylated by ULK2 in vitro.

The protein resides in the membrane. Its function is as follows. Adapter protein that links FGF and NGF receptors to downstream signaling pathways. Involved in the activation of MAP kinases. Down-regulates ERK2 signaling by interfering with the phosphorylation and nuclear translocation of ERK2. This Mus musculus (Mouse) protein is Fibroblast growth factor receptor substrate 3 (Frs3).